Consider the following 192-residue polypeptide: 7-methyl-GTP pyrophosphatase (192 aa).

Asp70 acts as the Proton acceptor in catalysis.

Belongs to the Maf family. YceF subfamily. Requires a divalent metal cation as cofactor.

It localises to the cytoplasm. It catalyses the reaction N(7)-methyl-GTP + H2O = N(7)-methyl-GMP + diphosphate + H(+). Its function is as follows. Nucleoside triphosphate pyrophosphatase that hydrolyzes 7-methyl-GTP (m(7)GTP). May have a dual role in cell division arrest and in preventing the incorporation of modified nucleotides into cellular nucleic acids. In Xanthomonas campestris pv. campestris (strain 8004), this protein is 7-methyl-GTP pyrophosphatase.